A 620-amino-acid polypeptide reads, in one-letter code: Glutathione-regulated potassium-efflux system protein KefC (620 aa).

Helical transmembrane passes span 4 to 24, 26 to 46, 54 to 74, 90 to 110, 114 to 134, 149 to 169, 178 to 198, 218 to 238, 270 to 290, 294 to 314, 327 to 347, and 359 to 379; these read HTLI…PIAV, LGLG…PWGL, SILH…GLEL, GALQ…LLGL, VAEL…MQAM, FAVL…IPLL, MGAF…VVLL, VFSA…EEVG, GLLL…GTLL, LRIV…LWLI, WFAV…GAAQ, and SLTL…VILN. The RCK N-terminal domain occupies 399–518; it reads QPRVIIAGFG…AGVEKPERET (120 aa). A disordered region spans residues 597-620; it reads GWQGTEEGKHTGNMADEPETKPSS.

This sequence belongs to the monovalent cation:proton antiporter 2 (CPA2) transporter (TC 2.A.37) family. KefC subfamily. In terms of assembly, homodimer. Interacts with the regulatory subunit KefF.

Its subcellular location is the cell inner membrane. Functionally, pore-forming subunit of a potassium efflux system that confers protection against electrophiles. Catalyzes K(+)/H(+) antiport. The sequence is that of Glutathione-regulated potassium-efflux system protein KefC from Escherichia coli O6:K15:H31 (strain 536 / UPEC).